Reading from the N-terminus, the 735-residue chain is Catalase-peroxidase (735 aa).

The segment at residues 97–220 (WHAAGTYRIG…LAAVQMGLIY (124 aa)) is a cross-link (tryptophyl-tyrosyl-methioninium (Trp-Tyr) (with M-246)). H98 serves as the catalytic Proton acceptor. Positions 220–246 (YVNPEGPNGKPDPMAAAHDIRETFGRM) form a cross-link, tryptophyl-tyrosyl-methioninium (Tyr-Met) (with W-97). H261 contacts heme b. The segment at 342-362 (AHQWTPKNPEAASTVPDAHDP) is disordered.

It belongs to the peroxidase family. Peroxidase/catalase subfamily. As to quaternary structure, homodimer or homotetramer. It depends on heme b as a cofactor. In terms of processing, formation of the three residue Trp-Tyr-Met cross-link is important for the catalase, but not the peroxidase activity of the enzyme.

It catalyses the reaction H2O2 + AH2 = A + 2 H2O. It carries out the reaction 2 H2O2 = O2 + 2 H2O. In terms of biological role, bifunctional enzyme with both catalase and broad-spectrum peroxidase activity. This is Catalase-peroxidase from Gloeobacter violaceus (strain ATCC 29082 / PCC 7421).